A 544-amino-acid chain; its full sequence is Cannabidiolic acid synthase (544 aa).

The first 28 residues, 1-28, serve as a signal peptide directing secretion; the sequence is MKCSTFSFWFVCKIIFFFFSFNIQTSIA. Cysteine 37 and cysteine 99 are oxidised to a cystine. N-linked (GlcNAc...) asparagine glycosylation is found at asparagine 45 and asparagine 65. Residues 77-251 enclose the FAD-binding PCMH-type domain; it reads TTPKPLVIVT…VAWKIRLVAV (175 aa). FAD-binding positions include 109–115 and serine 120; that span reads TRSGGHD. Positions 114–176 form a cross-link, 6-(S-cysteinyl)-8alpha-(pros-histidyl)-FAD (His-Cys); the sequence is HDSEGMSYIS…ENLSLAAGYC (63 aa). Asparagine 168 is a glycosylation site (N-linked (GlcNAc...) asparagine). FAD is bound by residues cysteine 176, 180–184, tyrosine 190, glutamate 236, and isoleucine 241; that span reads CAGGH. Cannabigerolate is bound at residue histidine 291. Residues asparagine 296, asparagine 304, and asparagine 328 are each glycosylated (N-linked (GlcNAc...) asparagine). Residues tyrosine 416 and glutamate 441 each contribute to the cannabigerolate site. 480–482 contacts FAD; that stretch reads YLN. Catalysis depends on tyrosine 483, which acts as the Proton acceptor. Asparagine 498 is a glycosylation site (N-linked (GlcNAc...) asparagine).

This sequence belongs to the oxygen-dependent FAD-linked oxidoreductase family. Monomer. FAD serves as cofactor. Post-translationally, glycosylated. In terms of processing, the FAD cofactor is bound via a bicovalent 6-S-cysteinyl, 8alpha-N1-histidyl FAD linkage. Expressed in young leaves.

Its subcellular location is the secreted. The protein resides in the extracellular space. It localises to the apoplast. The enzyme catalyses cannabigerolate + O2 = cannabidiolate + H2O2. It participates in secondary metabolite biosynthesis; terpenoid biosynthesis. Inhibited by Hg(2+). Its function is as follows. Oxidoreductase involved in the biosynthesis of cannabinoids-related terpenophenolic natural products, which have pharmacological activity. Catalyzes the stereoselective oxidative cyclization of the monoterpene moiety in cannabigerolic acid (CBGA), producing cannabidiolate (CBDA), the major cannabioid in fiber-type Cannabis plants. Can also use cannabinerolic acid as substrate, but not cannabigerol or cannabinerol. This Cannabis sativa (Hemp) protein is Cannabidiolic acid synthase.